A 229-amino-acid polypeptide reads, in one-letter code: MSFLQDSSFFSMGMWSIGVGAFGAAALALLLANTDMFLSKPQKAALEYLEDIDLKTLEKEPRTFKAKELWEKNGAVIMAVRRPGCFLCRAEAADLMSLKPKLDELGVPLYAVVKEKVKREVEDFQPYFKGEIFLDEKKKFYGPERRKMMLMGLVRLGVWYNSFRAWKGGFSGNFEGEGFILGGVFVIGSGKQGVLLEHREKEFGDRVNLLSVLEAVKKIKPQTPASRQS.

A thioredoxin fold region spans residues 14–112 (MWSIGVGAFG…DELGVPLYAV (99 aa)). Residues C85 and C88 each act as redox-active in the active site.

This sequence belongs to the peroxiredoxin-like PRXL2 family. PRXL2A subfamily. In terms of tissue distribution, expressed by the principal cells of the epididymis. Detected in the head region of epididymal sperm (at protein level). Expressed in bone marrow.

The protein resides in the cytoplasm. Its subcellular location is the secreted. Involved in redox regulation of the cell. Acts as an antioxidant. Inhibits TNFSF11-induced NFKB1 and JUN activation and osteoclast differentiation. May affect bone resorption and help to maintain bone mass. Acts as a negative regulator of macrophage-mediated inflammation by inhibiting macrophage production of inflammatory cytokines, probably through suppression of the MAPK signaling pathway. This chain is Peroxiredoxin-like 2A, found in Rattus norvegicus (Rat).